Reading from the N-terminus, the 24-residue chain is Hyaluronidase (24 aa).

As to expression, expressed by the venom gland.

Its subcellular location is the secreted. It carries out the reaction Random hydrolysis of (1-&gt;4)-linkages between N-acetyl-beta-D-glucosamine and D-glucuronate residues in hyaluronate.. Its function is as follows. Possesses high activity against hyaluronan in vitro. This chain is Hyaluronidase, found in Tityus stigmurus (Brazilian scorpion).